A 216-amino-acid chain; its full sequence is Small ribosomal subunit protein eS6 (216 aa).

This sequence belongs to the eukaryotic ribosomal protein eS6 family.

The chain is Small ribosomal subunit protein eS6 from Staphylothermus marinus (strain ATCC 43588 / DSM 3639 / JCM 9404 / F1).